A 54-amino-acid chain; its full sequence is MRGLEAPGAVGPTGPSGAPGSQGPDGDVGGMGPEGPKGDDGPVGPKGPQGAAIF.

Positions 1–54 are disordered; sequence MRGLEAPGAVGPTGPSGAPGSQGPDGDVGGMGPEGPKGDDGPVGPKGPQGAAIF. Residues 7–51 enclose the Collagen-like domain; that stretch reads PGAVGPTGPSGAPGSQGPDGDVGGMGPEGPKGDDGPVGPKGPQGA. The span at 26–35 shows a compositional bias: gly residues; sequence GDVGGMGPEG. Low complexity predominate over residues 42-54; the sequence is PVGPKGPQGAAIF.

The protein is Putative collagen-like domain-containing protein 065L of Dryophytes versicolor (chameleon treefrog).